A 461-amino-acid chain; its full sequence is Phosphomethylpyrimidine synthase (461 aa).

Residues Asn-80, Met-109, Tyr-138, His-173, 193–195, 234–237, and Glu-273 contribute to the substrate site; these read SRG and DGLR. Residue His-277 coordinates Zn(2+). A substrate-binding site is contributed by Tyr-300. His-341 is a binding site for Zn(2+). The [4Fe-4S] cluster site is built by Cys-421, Cys-424, and Cys-429.

The protein belongs to the ThiC family. [4Fe-4S] cluster serves as cofactor.

It catalyses the reaction 5-amino-1-(5-phospho-beta-D-ribosyl)imidazole + S-adenosyl-L-methionine = 4-amino-2-methyl-5-(phosphooxymethyl)pyrimidine + CO + 5'-deoxyadenosine + formate + L-methionine + 3 H(+). It participates in cofactor biosynthesis; thiamine diphosphate biosynthesis. Functionally, catalyzes the synthesis of the hydroxymethylpyrimidine phosphate (HMP-P) moiety of thiamine from aminoimidazole ribotide (AIR) in a radical S-adenosyl-L-methionine (SAM)-dependent reaction. This Solibacter usitatus (strain Ellin6076) protein is Phosphomethylpyrimidine synthase.